The following is a 47-amino-acid chain: STKNGRDSNPKYLGVKTCHAQFVTAGSILVRQRGSKFHHGQNVGVAK.

It belongs to the bacterial ribosomal protein bL27 family.

The protein localises to the plastid. The protein resides in the chloroplast. The sequence is that of Large ribosomal subunit protein bL27c-2 from Cyanidium caldarium (Red alga).